A 166-amino-acid polypeptide reads, in one-letter code: HTH-type transcriptional regulator PrsX (166 aa).

The HTH marR-type domain maps to Glu25–Ala159.

It is found in the cytoplasm. This Escherichia coli O6:H1 (strain CFT073 / ATCC 700928 / UPEC) protein is HTH-type transcriptional regulator PrsX (prsX).